The chain runs to 70 residues: Guanine nucleotide-binding protein G(I)/G(S)/G(O) subunit gamma-8 (70 aa).

Cys-67 bears the Cysteine methyl ester mark. Residue Cys-67 is the site of S-geranylgeranyl cysteine attachment. A propeptide spans 68 to 70 (VLL) (removed in mature form).

This sequence belongs to the G protein gamma family. As to quaternary structure, g proteins are composed of 3 units, alpha, beta and gamma.

The protein localises to the cell membrane. Guanine nucleotide-binding proteins (G proteins) are involved as a modulator or transducer in various transmembrane signaling systems. The beta and gamma chains are required for the GTPase activity, for replacement of GDP by GTP, and for G protein-effector interaction. This chain is Guanine nucleotide-binding protein G(I)/G(S)/G(O) subunit gamma-8 (GNG8), found in Homo sapiens (Human).